The following is a 310-amino-acid chain: tRNA dimethylallyltransferase (310 aa).

11–18 (GPTGVGKT) contacts ATP. 13 to 18 (TGVGKT) serves as a coordination point for substrate.

The protein belongs to the IPP transferase family. Monomer. Mg(2+) is required as a cofactor.

The enzyme catalyses adenosine(37) in tRNA + dimethylallyl diphosphate = N(6)-dimethylallyladenosine(37) in tRNA + diphosphate. Catalyzes the transfer of a dimethylallyl group onto the adenine at position 37 in tRNAs that read codons beginning with uridine, leading to the formation of N6-(dimethylallyl)adenosine (i(6)A). This is tRNA dimethylallyltransferase from Latilactobacillus sakei subsp. sakei (strain 23K) (Lactobacillus sakei subsp. sakei).